Consider the following 418-residue polypeptide: Putative competence-damage inducible protein (418 aa).

This sequence belongs to the CinA family.

The chain is Putative competence-damage inducible protein from Streptococcus pneumoniae (strain CGSP14).